A 971-amino-acid polypeptide reads, in one-letter code: DNA-directed RNA polymerase subunit Rpo1N (971 aa).

Residue Met-1 is modified to Blocked amino end (Met). Residues Cys-62, Cys-65, Cys-72, His-75, Cys-102, Cys-105, Cys-149, and Cys-152 each coordinate Zn(2+). The interval 185 to 204 is disordered; that stretch reads SMQPDEDEDDAGVSPQELAE. Mg(2+) contacts are provided by Asp-527, Asp-529, and Asp-531. Positions 951–971 are disordered; it reads VEEPPTNLSEHGAAWEVESDD.

The protein belongs to the RNA polymerase beta' chain family. In terms of assembly, part of the RNA polymerase complex. Mg(2+) is required as a cofactor. It depends on Zn(2+) as a cofactor. Post-translationally, the N-terminus is blocked.

The protein resides in the cytoplasm. The enzyme catalyses RNA(n) + a ribonucleoside 5'-triphosphate = RNA(n+1) + diphosphate. Its function is as follows. DNA-dependent RNA polymerase (RNAP) catalyzes the transcription of DNA into RNA using the four ribonucleoside triphosphates as substrates. Forms the clamp head domain. The chain is DNA-directed RNA polymerase subunit Rpo1N from Halobacterium salinarum (strain ATCC 29341 / DSM 671 / R1).